Here is a 501-residue protein sequence, read N- to C-terminus: Ribose import ATP-binding protein RbsA (501 aa).

2 ABC transporter domains span residues 5 to 241 (LELK…VGRK) and 249 to 495 (LNLP…VGKQ). Residue 37 to 44 (GENGAGKS) participates in ATP binding.

The protein belongs to the ABC transporter superfamily. Ribose importer (TC 3.A.1.2.1) family. The complex is composed of an ATP-binding protein (RbsA), two transmembrane proteins (RbsC) and a solute-binding protein (RbsB).

The protein localises to the cell inner membrane. It carries out the reaction D-ribose(out) + ATP + H2O = D-ribose(in) + ADP + phosphate + H(+). In terms of biological role, part of the ABC transporter complex RbsABC involved in ribose import. Responsible for energy coupling to the transport system. This chain is Ribose import ATP-binding protein RbsA, found in Photorhabdus laumondii subsp. laumondii (strain DSM 15139 / CIP 105565 / TT01) (Photorhabdus luminescens subsp. laumondii).